A 429-amino-acid chain; its full sequence is 3-phosphoshikimate 1-carboxyvinyltransferase (429 aa).

Positions 11, 12, and 16 each coordinate 3-phosphoshikimate. Phosphoenolpyruvate is bound at residue lysine 11. The phosphoenolpyruvate site is built by glycine 82 and arginine 110. Residues serine 155, glutamine 157, aspartate 302, and lysine 329 each coordinate 3-phosphoshikimate. Glutamine 157 is a phosphoenolpyruvate binding site. Aspartate 302 acts as the Proton acceptor in catalysis. Phosphoenolpyruvate contacts are provided by arginine 333 and arginine 385.

Belongs to the EPSP synthase family. As to quaternary structure, monomer.

It localises to the cytoplasm. It carries out the reaction 3-phosphoshikimate + phosphoenolpyruvate = 5-O-(1-carboxyvinyl)-3-phosphoshikimate + phosphate. The protein operates within metabolic intermediate biosynthesis; chorismate biosynthesis; chorismate from D-erythrose 4-phosphate and phosphoenolpyruvate: step 6/7. Catalyzes the transfer of the enolpyruvyl moiety of phosphoenolpyruvate (PEP) to the 5-hydroxyl of shikimate-3-phosphate (S3P) to produce enolpyruvyl shikimate-3-phosphate and inorganic phosphate. The polypeptide is 3-phosphoshikimate 1-carboxyvinyltransferase (Helicobacter pylori (strain ATCC 700392 / 26695) (Campylobacter pylori)).